The sequence spans 148 residues: MSMVKEFKEFALKGNVMDLAVGVIIGGAFSTIVNSIVKDLIMPVVGLATGGLDFSNKFVRLGPIPPTFKGSPESYKDLQTAGVAVFGYGSFITVLINFLILAFIIFLMVKFINNLRKPAEAAPAAPPPPPEDVLLLREIRDSLKNSPR.

A run of 2 helical transmembrane segments spans residues Val16–Ile36 and Gly89–Val109.

The protein belongs to the MscL family. As to quaternary structure, homopentamer.

Its subcellular location is the cell inner membrane. Its function is as follows. Channel that opens in response to stretch forces in the membrane lipid bilayer. May participate in the regulation of osmotic pressure changes within the cell. This chain is Large-conductance mechanosensitive channel, found in Paraburkholderia phytofirmans (strain DSM 17436 / LMG 22146 / PsJN) (Burkholderia phytofirmans).